Consider the following 173-residue polypeptide: Chromophore lyase CpcS/CpeS 3 (173 aa).

The protein belongs to the CpcS/CpeS biliprotein lyase family.

Covalently attaches a chromophore to Cys residue(s) of phycobiliproteins. The polypeptide is Chromophore lyase CpcS/CpeS 3 (Trichodesmium erythraeum (strain IMS101)).